The sequence spans 264 residues: Ribosomal RNA small subunit methyltransferase J (264 aa).

Residues 111 to 112 (RD), 127 to 128 (ER), and D180 each bind S-adenosyl-L-methionine.

The protein belongs to the methyltransferase superfamily. RsmJ family.

The protein localises to the cytoplasm. It catalyses the reaction guanosine(1516) in 16S rRNA + S-adenosyl-L-methionine = N(2)-methylguanosine(1516) in 16S rRNA + S-adenosyl-L-homocysteine + H(+). Functionally, specifically methylates the guanosine in position 1516 of 16S rRNA. This chain is Ribosomal RNA small subunit methyltransferase J, found in Alkalilimnicola ehrlichii (strain ATCC BAA-1101 / DSM 17681 / MLHE-1).